The primary structure comprises 962 residues: Putative primase C962R (962 aa).

The SF3 helicase domain maps to 607 to 775 (ELDARLWIMF…PDPNNSYEKK (169 aa)). 636 to 643 (GGGCNGKT) is an ATP binding site.

Belongs to the asfivirus helicase C962R family.

The protein is Putative primase C962R of African swine fever virus (isolate Pig/Kenya/KEN-50/1950) (ASFV).